Reading from the N-terminus, the 657-residue chain is LIM and SH3 domain protein Lasp (657 aa).

Residues 3–63 (KTCARCQKVV…EAHIPKAKAT (61 aa)) form the LIM zinc-binding domain. Nebulin repeat units lie at residues 64-95 (AIADTPELKRIAENTKIQSNVKYHADFEKAKG) and 96-130 (KFTQVADDPETLRIKQNTKHISNVAYHGDLEKKAA). Disordered stretches follow at residues 130 to 151 (AMEKQRGSAEVSDSSNESEYFS), 164 to 223 (PTAS…PIQH), 235 to 257 (YQQLQQQQQQQQQQRAQQQQLHD), 294 to 318 (LYPTATSQQQQMPPPQSPANPQQQA), 332 to 415 (NSHH…SAAS), and 460 to 528 (KQHA…PKRI). Residues 140–150 (VSDSSNESEYF) are compositionally biased toward polar residues. Low complexity-rich tracts occupy residues 172–215 (AATT…QQQT) and 236–254 (QQLQQQQQQQQQQRAQQQQ). The segment covering 332-341 (NSHHPSGNSV) has biased composition (polar residues). Low complexity predominate over residues 342–357 (DQYDQPQQQQHQPQQQ). Over residues 358-370 (STNPTLVAAQQQQ) the composition is skewed to polar residues. Low complexity predominate over residues 371–403 (SHHSLLNNNASNGGISHSHHSNINNNGHGSQNQ). Polar residues predominate over residues 460–475 (KQHASNGHMPNQQQQH). Phosphoserine occurs at positions 505 and 530. Residues 548 to 592 (EQAHQQQKHQQYYQQVQMMQQQEHPPQQQQMRQQPSYSSLQEKQS) are disordered. Residues 549-586 (QAHQQQKHQQYYQQVQMMQQQEHPPQQQQMRQQPSYSS) are compositionally biased toward low complexity. The SH3 domain maps to 596 to 657 (TAMRVYRAIY…PANYVEQAVI (62 aa)).

Interacts with osk.

The protein is LIM and SH3 domain protein Lasp of Drosophila melanogaster (Fruit fly).